We begin with the raw amino-acid sequence, 422 residues long: Probable tRNA pseudouridine synthase D (422 aa).

Catalysis depends on Asp83, which acts as the Nucleophile. The 223-residue stretch at 164–386 (GFPNYFGSQR…AGGRRELLIK (223 aa)) folds into the TRUD domain.

Belongs to the pseudouridine synthase TruD family.

The catalysed reaction is uridine(13) in tRNA = pseudouridine(13) in tRNA. Could be responsible for synthesis of pseudouridine from uracil-13 in transfer RNAs. This chain is Probable tRNA pseudouridine synthase D, found in Thermococcus sibiricus (strain DSM 12597 / MM 739).